A 523-amino-acid polypeptide reads, in one-letter code: 2-isopropylmalate synthase (523 aa).

Residues 5–267 (VIIFDTTLRD…HTNINHHEIW (263 aa)) enclose the Pyruvate carboxyltransferase domain. Mn(2+) contacts are provided by D14, H202, H204, and N238. Residues 392–523 (RLDYFSVQSG…QNKENNKETV (132 aa)) form a regulatory domain region.

It belongs to the alpha-IPM synthase/homocitrate synthase family. LeuA type 1 subfamily. As to quaternary structure, homodimer. Requires Mn(2+) as cofactor.

The protein localises to the cytoplasm. The catalysed reaction is 3-methyl-2-oxobutanoate + acetyl-CoA + H2O = (2S)-2-isopropylmalate + CoA + H(+). Its pathway is amino-acid biosynthesis; L-leucine biosynthesis; L-leucine from 3-methyl-2-oxobutanoate: step 1/4. Catalyzes the condensation of the acetyl group of acetyl-CoA with 3-methyl-2-oxobutanoate (2-ketoisovalerate) to form 3-carboxy-3-hydroxy-4-methylpentanoate (2-isopropylmalate). The polypeptide is 2-isopropylmalate synthase (Klebsiella pneumoniae (strain 342)).